We begin with the raw amino-acid sequence, 490 residues long: Aspartyl/glutamyl-tRNA(Asn/Gln) amidotransferase subunit B (490 aa).

The protein belongs to the GatB/GatE family. GatB subfamily. In terms of assembly, heterotrimer of A, B and C subunits.

The catalysed reaction is L-glutamyl-tRNA(Gln) + L-glutamine + ATP + H2O = L-glutaminyl-tRNA(Gln) + L-glutamate + ADP + phosphate + H(+). It carries out the reaction L-aspartyl-tRNA(Asn) + L-glutamine + ATP + H2O = L-asparaginyl-tRNA(Asn) + L-glutamate + ADP + phosphate + 2 H(+). Allows the formation of correctly charged Asn-tRNA(Asn) or Gln-tRNA(Gln) through the transamidation of misacylated Asp-tRNA(Asn) or Glu-tRNA(Gln) in organisms which lack either or both of asparaginyl-tRNA or glutaminyl-tRNA synthetases. The reaction takes place in the presence of glutamine and ATP through an activated phospho-Asp-tRNA(Asn) or phospho-Glu-tRNA(Gln). The chain is Aspartyl/glutamyl-tRNA(Asn/Gln) amidotransferase subunit B from Prochlorococcus marinus subsp. pastoris (strain CCMP1986 / NIES-2087 / MED4).